A 193-amino-acid chain; its full sequence is dCTP deaminase (193 aa).

DCTP is bound by residues 110–115 (RSSLAR), aspartate 128, 136–138 (VLE), tyrosine 171, lysine 178, and glutamine 182. Catalysis depends on glutamate 138, which acts as the Proton donor/acceptor.

This sequence belongs to the dCTP deaminase family. As to quaternary structure, homotrimer.

The catalysed reaction is dCTP + H2O + H(+) = dUTP + NH4(+). The protein operates within pyrimidine metabolism; dUMP biosynthesis; dUMP from dCTP (dUTP route): step 1/2. In terms of biological role, catalyzes the deamination of dCTP to dUTP. The polypeptide is dCTP deaminase (Aeromonas salmonicida (strain A449)).